The following is a 572-amino-acid chain: Putative lysozyme-like protein (572 aa).

An N-terminal signal peptide occupies residues 1-17 (MRLLLVLLALIFSVVSA). Low complexity predominate over residues 145 to 165 (MSSSGSSSSSGSSGSSSSSSG). Disordered regions lie at residues 145-199 (MSSS…HGGG), 231-297 (SSSS…GGGV), 326-388 (ANSV…GERK), and 433-469 (AGSSSSSGSSGSSSSSSSSGSSGGSSGGSSGGGGGSG). Residues 166–185 (SSGGGSSGGGSGGGGGGSGL) are compositionally biased toward gly residues. Low complexity predominate over residues 231 to 240 (SSSSADAGSS). A compositionally biased stretch (gly residues) spans 258-282 (STGGTGGSSGSSGGGSGGGGGGSGL). A compositionally biased stretch (low complexity) spans 326 to 358 (ANSVSSLAGSMSSSGSSSSSGSSGSSSSSSSSG). Positions 359–382 (SSGGSSGGGSSGGGSGGGGGGSGL) are enriched in gly residues. Low complexity predominate over residues 433 to 452 (AGSSSSSGSSGSSSSSSSSG). A compositionally biased stretch (gly residues) spans 453–469 (SSGGSSGGSSGGGGGSG).

Belongs to the dictyostelium lysozyme family.

This Dictyostelium discoideum (Social amoeba) protein is Putative lysozyme-like protein (alyL).